A 272-amino-acid chain; its full sequence is 3-methyl-2-oxobutanoate hydroxymethyltransferase (272 aa).

The Mg(2+) site is built by aspartate 53 and aspartate 92. 3-methyl-2-oxobutanoate contacts are provided by residues 53-54, aspartate 92, and lysine 120; that span reads DS. Residue glutamate 122 coordinates Mg(2+). Glutamate 189 serves as the catalytic Proton acceptor.

The protein belongs to the PanB family. In terms of assembly, homodecamer; pentamer of dimers. The cofactor is Mg(2+).

Its subcellular location is the cytoplasm. It catalyses the reaction 3-methyl-2-oxobutanoate + (6R)-5,10-methylene-5,6,7,8-tetrahydrofolate + H2O = 2-dehydropantoate + (6S)-5,6,7,8-tetrahydrofolate. Its pathway is cofactor biosynthesis; (R)-pantothenate biosynthesis; (R)-pantoate from 3-methyl-2-oxobutanoate: step 1/2. Functionally, catalyzes the reversible reaction in which hydroxymethyl group from 5,10-methylenetetrahydrofolate is transferred onto alpha-ketoisovalerate to form ketopantoate. The protein is 3-methyl-2-oxobutanoate hydroxymethyltransferase of Ralstonia pickettii (strain 12J).